Here is a 426-residue protein sequence, read N- to C-terminus: Branched-chain amino acid permease BrnQ (426 aa).

12 helical membrane passes run 11–31 (LMLF…MLGL), 41–61 (ILGF…AVVL), 76–96 (IFGL…YALP), 111–131 (NALY…ALSW), 140–160 (LGKW…VLSV), 186–206 (GYMT…ISAF), 219–239 (VVSA…LGSI), 268–288 (IMFV…LISA), 296–316 (LLPG…SFGV), 324–344 (VLAV…TLVF), 358–378 (TYLF…IPAL), and 390–410 (MSLG…AIDW).

The protein belongs to the branched chain amino acid transporter family.

The protein resides in the cell membrane. Branched chain amino acid transport system, which transports isoleucine. In Corynebacterium glutamicum (strain ATCC 13032 / DSM 20300 / JCM 1318 / BCRC 11384 / CCUG 27702 / LMG 3730 / NBRC 12168 / NCIMB 10025 / NRRL B-2784 / 534), this protein is Branched-chain amino acid permease BrnQ.